Consider the following 492-residue polypeptide: Lipopolysaccharide biosynthesis protein WzxC (492 aa).

At 1–12 (MSLREKTISGAK) the chain is on the cytoplasmic side. Residues 13–33 (WSAIATVIIIGLGLVQMTVLA) form a helical membrane-spanning segment. Residues 34–42 (RIIDNHQFG) are Periplasmic-facing. The helical transmembrane segment at 43-63 (LLTVSLVIIALADTLSDFGIA) threads the bilayer. Topologically, residues 64-81 (NSIIQRKEISHLELTTLY) are cytoplasmic. The helical transmembrane segment at 82-102 (WLNVGLGIVVCVAVFLLSDLI) threads the bilayer. At 103–104 (GD) the chain is on the periplasmic side. Residues 105–125 (VLNNPDLAPLIKTLSLAFVVI) form a helical membrane-spanning segment. Residues 126–157 (PHGQQFRALMQKELEFNKIGMIETSAVLAGFT) are Cytoplasmic-facing. The chain crosses the membrane as a helical span at residues 158 to 178 (CTVVSAHFWPLAMTAILGYLV). Residues 179–236 (NSAVRTLLFGYFGRKIYRPGLHFSLASVAPNLRFGAWLTADSIINYLNTNLSTLVLAR) lie on the Periplasmic side of the membrane. The helical transmembrane segment at 237-257 (ILGAGVAGGYNLAYNVAVVPP) threads the bilayer. Residues 258–288 (MKLNPIITRVLFPAFAKIQDDTEKLRVNFYK) lie on the Cytoplasmic side of the membrane. A helical transmembrane segment spans residues 289–309 (LLSVVGIINFPALLGLMVVSN). Residues 310–322 (NFVPLVFGEKWNS) lie on the Periplasmic side of the membrane. Residues 323 to 343 (IIPVLQLLCVVGLLRSVGNPI) form a helical membrane-spanning segment. Over 344 to 364 (GSLLMAKARVDISFKFNVFKT) the chain is Cytoplasmic. The chain crosses the membrane as a helical span at residues 365–385 (FLFIPAIVIGGQMAGAIGVTL). Residue glycine 386 is a topological domain, periplasmic. The chain crosses the membrane as a helical span at residues 387-407 (FLLVQIINTILSYFVMIKPVL). The Cytoplasmic segment spans residues 408–417 (GSSYRQYILS). A helical transmembrane segment spans residues 418–438 (LWLPFYLSLPTLVVSYALGIV). Residues 439 to 445 (LKGQLAL) lie on the Periplasmic side of the membrane. Residues 446 to 466 (GMLLAVQIATGVLAFVVMIVL) traverse the membrane as a helical segment. Over 467-492 (SRHPLVVEVKRQFCRSEKMKMLLRAG) the chain is Cytoplasmic.

It belongs to the polysaccharide synthase family.

It localises to the cell inner membrane. The protein operates within bacterial outer membrane biogenesis; lipopolysaccharide biosynthesis. This Escherichia coli (strain K12) protein is Lipopolysaccharide biosynthesis protein WzxC (wzxC).